The primary structure comprises 369 residues: Type 2 DNA topoisomerase 6 subunit A (369 aa).

The Topo IIA-type catalytic domain occupies 10–146 (KPREIAKQKI…LGFIPEEDGS (137 aa)). The active-site O-(5'-phospho-DNA)-tyrosine intermediate is Y103. Mg(2+)-binding residues include E197 and D249.

The protein belongs to the TOP6A family. In terms of assembly, homodimer. Heterotetramer of two Top6A and two Top6B chains. Requires Mg(2+) as cofactor.

The enzyme catalyses ATP-dependent breakage, passage and rejoining of double-stranded DNA.. Functionally, relaxes both positive and negative superturns and exhibits a strong decatenase activity. This chain is Type 2 DNA topoisomerase 6 subunit A, found in Methanocaldococcus jannaschii (strain ATCC 43067 / DSM 2661 / JAL-1 / JCM 10045 / NBRC 100440) (Methanococcus jannaschii).